Consider the following 118-residue polypeptide: Secreted effector CSEP0064 (118 aa).

Residues 1–21 (MRPFQLLSALAIFINLEAVEA) form the signal peptide. C27 and C113 are disulfide-bonded.

In terms of assembly, interacts in planta with the pathogenesis-related protein PR10.

Its subcellular location is the secreted. It localises to the host cell. Functionally, secreted effector that increases susceptibility to infection in both monocotyledonous and dicotyledonous plants. Non-catalytic homolog of fungal RNases that binds host RNA and inhibits the degradation of host ribosomal RNA induced by ribosome-inactivating proteins (RIPs), preventing host cell death, an inviable interaction and demise of the fungus. This is Secreted effector CSEP0064 from Blumeria graminis f. sp. hordei (strain DH14) (Barley powdery mildew).